The following is a 124-amino-acid chain: MKTMIAWLVLLTFAAALCFADEGLKQEHMNERKKSRFREDIPDEISEDLLLQEMEAMEAELLEKEMRMEENRNSREKRCLGEDISCGEKPGDLVRMPCCAKYECKETAGYWWYQKRFCVKKKSG.

The signal sequence occupies residues 1 to 20 (MKTMIAWLVLLTFAAALCFA). Positions 21 to 78 (DEGLKQEHMNERKKSRFREDIPDEISEDLLLQEMEAMEAELLEKEMRMEENRNSREKR) are excised as a propeptide. Disulfide bonds link Cys-79/Cys-99, Cys-86/Cys-104, and Cys-98/Cys-118.

This sequence belongs to the neurotoxin 14 (magi-1) family. 04 (ICK-6) subfamily. As to expression, expressed by the venom gland.

Its subcellular location is the secreted. Its function is as follows. Ion channel inhibitor. The polypeptide is U12-barytoxin-Tl1a (Trittame loki (Brush-footed trapdoor spider)).